A 164-amino-acid polypeptide reads, in one-letter code: UPF0114 protein KPN78578_33570 (164 aa).

The next 4 membrane-spanning stretches (helical) occupy residues 15–35, 53–73, 109–126, and 136–156; these read LLAPVYFGLSLGLIALTIKFF, MILTLLSLVDMTLVGGLLVMV, VAASIVAISSIHLLRVFM, and LMWYVIIHLTFVLSAFVMGYL.

This sequence belongs to the UPF0114 family.

The protein localises to the cell membrane. The chain is UPF0114 protein KPN78578_33570 from Klebsiella pneumoniae subsp. pneumoniae (strain ATCC 700721 / MGH 78578).